The primary structure comprises 261 residues: 14-3-3-like protein A (261 aa).

Belongs to the 14-3-3 family.

The protein is 14-3-3-like protein A of Vicia faba (Broad bean).